The chain runs to 260 residues: MICOS complex subunit mic25-a (260 aa).

The segment at Met-1–Gln-92 is disordered. Gly-2 is lipidated: N-myristoyl glycine. Residues Arg-28–Asp-39 show a composition bias toward basic and acidic residues. Residues Ser-48–Ser-64 are compositionally biased toward low complexity. The stretch at Ala-94–Glu-187 forms a coiled coil. One can recognise a CHCH domain in the interval Asp-213 to Leu-255. Short sequence motifs (cx9C motif) lie at residues Cys-216–Cys-226 and Cys-237–Cys-247. Cystine bridges form between Cys-216-Cys-247 and Cys-226-Cys-237.

Belongs to the MICOS complex subunit Mic19 family. Metazoan Mic25 subfamily. In terms of assembly, component of the mitochondrial contact site and cristae organizing system (MICOS) complex (also known as MINOS or MitOS complex).

It localises to the mitochondrion inner membrane. Component of the MICOS complex, a large protein complex of the mitochondrial inner membrane that plays crucial roles in the maintenance of crista junctions, inner membrane architecture, and formation of contact sites to the outer membrane. The sequence is that of MICOS complex subunit mic25-a (chchd6-a) from Xenopus laevis (African clawed frog).